The chain runs to 20 residues: Truncated non-structural protein of 4.9 kDa (20 aa).

It belongs to the coronaviruses ns4.9 protein family.

The protein is Truncated non-structural protein of 4.9 kDa of Sus scrofa (Pig).